The chain runs to 155 residues: Xanthine-guanine phosphoribosyltransferase (155 aa).

5-phospho-alpha-D-ribose 1-diphosphate-binding positions include 37 to 38 (RG), arginine 69, and 90 to 98 (EDLVDTGTT). Arginine 69 contacts GMP. A Mg(2+)-binding site is contributed by aspartate 91. Guanine-binding residues include aspartate 94 and isoleucine 137. Positions 94 and 137 each coordinate xanthine. GMP contacts are provided by residues 94 to 98 (DTGTT) and 136 to 137 (WI).

Belongs to the purine/pyrimidine phosphoribosyltransferase family. XGPT subfamily. Homotetramer. Requires Mg(2+) as cofactor.

The protein resides in the cell inner membrane. It carries out the reaction GMP + diphosphate = guanine + 5-phospho-alpha-D-ribose 1-diphosphate. The enzyme catalyses XMP + diphosphate = xanthine + 5-phospho-alpha-D-ribose 1-diphosphate. The catalysed reaction is IMP + diphosphate = hypoxanthine + 5-phospho-alpha-D-ribose 1-diphosphate. It functions in the pathway purine metabolism; GMP biosynthesis via salvage pathway; GMP from guanine: step 1/1. It participates in purine metabolism; XMP biosynthesis via salvage pathway; XMP from xanthine: step 1/1. Functionally, purine salvage pathway enzyme that catalyzes the transfer of the ribosyl-5-phosphate group from 5-phospho-alpha-D-ribose 1-diphosphate (PRPP) to the N9 position of the 6-oxopurines guanine and xanthine to form the corresponding ribonucleotides GMP (guanosine 5'-monophosphate) and XMP (xanthosine 5'-monophosphate), with the release of PPi. To a lesser extent, also acts on hypoxanthine. The chain is Xanthine-guanine phosphoribosyltransferase from Aeromonas hydrophila subsp. hydrophila (strain ATCC 7966 / DSM 30187 / BCRC 13018 / CCUG 14551 / JCM 1027 / KCTC 2358 / NCIMB 9240 / NCTC 8049).